The sequence spans 314 residues: Malate dehydrogenase (314 aa).

Residues 13-18 and aspartate 37 each bind NAD(+); that span reads GGGQIG. Residues arginine 88 and arginine 94 each contribute to the substrate site. NAD(+) contacts are provided by residues asparagine 101 and 124–126; that span reads VAN. Positions 126 and 157 each coordinate substrate. The active-site Proton acceptor is histidine 181.

Belongs to the LDH/MDH superfamily. MDH type 3 family.

The catalysed reaction is (S)-malate + NAD(+) = oxaloacetate + NADH + H(+). In terms of biological role, catalyzes the reversible oxidation of malate to oxaloacetate. The protein is Malate dehydrogenase of Myxococcus xanthus.